A 137-amino-acid polypeptide reads, in one-letter code: Probable 4-amino-4-deoxy-L-arabinose-phosphoundecaprenol flippase subunit ArnF (137 aa).

The Cytoplasmic portion of the chain corresponds to 1 to 3 (MNA). Residues 4-24 (LRGWLAALGSMLLASAAQLGM) form a helical membrane-spanning segment. At 25–44 (RWGMSRLPLPEAWAGQTPER) the chain is on the periplasmic side. Residues 45–65 (AALLAVALAVAAYAASLLCWL) traverse the membrane as a helical segment. Residues 66–76 (AALRHLPLGRA) lie on the Cytoplasmic side of the membrane. Residues 77–97 (YSLLSASYALVYLLAASLPAF) traverse the membrane as a helical segment. Residues 98-100 (DET) lie on the Periplasmic side of the membrane. A helical transmembrane segment spans residues 101-121 (FSTSKILGVGLVVLGVLTVNA). Residues 122-137 (RRTAAAPAHHPSRKAP) are Cytoplasmic-facing.

Belongs to the ArnF family. Heterodimer of ArnE and ArnF.

It localises to the cell inner membrane. It functions in the pathway bacterial outer membrane biogenesis; lipopolysaccharide biosynthesis. Translocates 4-amino-4-deoxy-L-arabinose-phosphoundecaprenol (alpha-L-Ara4N-phosphoundecaprenol) from the cytoplasmic to the periplasmic side of the inner membrane. This is Probable 4-amino-4-deoxy-L-arabinose-phosphoundecaprenol flippase subunit ArnF from Pseudomonas aeruginosa (strain LESB58).